Here is a 637-residue protein sequence, read N- to C-terminus: Probable potassium transport system protein Kup (637 aa).

The next 12 helical transmembrane spans lie at 25 to 45 (ISLA…LYAI), 62 to 82 (VLGV…LKYL), 115 to 135 (WFLV…GMIT), 149 to 169 (IIAP…LTGL), 180 to 200 (VGAL…VLGL), 227 to 247 (LQGF…EALY), 263 to 283 (ILFV…LLLF), 295 to 315 (LVPS…TIIA), 352 to 372 (IYVP…VIGF), 378 to 398 (LAAA…ILFY), 410 to 430 (LATN…FGAS), and 434 to 454 (LFHG…LMLT).

Belongs to the HAK/KUP transporter (TC 2.A.72) family.

It localises to the cell inner membrane. It catalyses the reaction K(+)(in) + H(+)(in) = K(+)(out) + H(+)(out). In terms of biological role, transport of potassium into the cell. Likely operates as a K(+):H(+) symporter. The chain is Probable potassium transport system protein Kup from Chlorobium phaeobacteroides (strain DSM 266 / SMG 266 / 2430).